A 523-amino-acid chain; its full sequence is GMP synthase [glutamine-hydrolyzing] (523 aa).

One can recognise a Glutamine amidotransferase type-1 domain in the interval 8–205 (KILILDFGSQ…VVNICGCETK (198 aa)). Cysteine 85 (nucleophile) is an active-site residue. Residues histidine 179 and glutamate 181 contribute to the active site. The region spanning 206–398 (WTAENIIEDA…LGLPAEMINR (193 aa)) is the GMPS ATP-PPase domain. 233–239 (SGGVDSS) is a binding site for ATP.

In terms of assembly, homodimer.

It catalyses the reaction XMP + L-glutamine + ATP + H2O = GMP + L-glutamate + AMP + diphosphate + 2 H(+). The protein operates within purine metabolism; GMP biosynthesis; GMP from XMP (L-Gln route): step 1/1. Its function is as follows. Catalyzes the synthesis of GMP from XMP. The chain is GMP synthase [glutamine-hydrolyzing] from Haemophilus influenzae (strain PittGG).